We begin with the raw amino-acid sequence, 907 residues long: Leucine-rich repeat-containing G-protein coupled receptor 5 (907 aa).

An N-terminal signal peptide occupies residues 1–21 (MDTSCVHMLLSLLALLQLVAA). Topologically, residues 22-561 (GSSPGPDAIP…EHLFGSWLIR (540 aa)) are extracellular. The LRRNT domain occupies 25–66 (PGPDAIPRGCPSHCHCELDGRMLLRVDCSDLGLSELPSNLSV). 2 disulfide bridges follow: Cys34–Cys40 and Cys38–Cys52. N-linked (GlcNAc...) asparagine glycans are attached at residues Asn63 and Asn77. LRR repeat units lie at residues 67-88 (FTSY…LLHR), 91-112 (FLEE…AFTG), 115-136 (SLKV…ALQN), 139-160 (SLQS…CFSG), 163-184 (SLRH…AFRS), 187-208 (ALQA…AFGN), 211-232 (SLVV…CFDG), 235-256 (SLET…IKTL), 258-279 (NLKE…AFVG), 282-303 (SLIT…AFQH), 306-325 (ELRT…PHLT), 329-350 (TLES…VCDQ), 353-374 (NLQV…SGCQ), 375-396 (KLQK…TFQQ), 399-420 (NLRS…AFST), and 423-446 (SLIK…HGLT). The N-linked (GlcNAc...) asparagine glycan is linked to Asn208. A disulfide bridge connects residues Cys348 and Cys373. The cysteines at positions 479 and 541 are disulfide-linked. Residues 562–582 (IGVWTTAVLALSCNALVALTV) traverse the membrane as a helical segment. Topologically, residues 583–593 (FRTPLYISSIK) are cytoplasmic. Residues 594–614 (LLIGVIAVVDILMGVSSAVLA) form a helical membrane-spanning segment. At 615-638 (AVDAFTFGRFAQHGAWWEDGIGCQ) the chain is on the extracellular side. Cysteines 637 and 712 form a disulfide. Residues 639–659 (IVGFLSIFASESSIFLLTLAA) traverse the membrane as a helical segment. At 660–682 (LERGFSVKCSSKFEVKAPLFSLR) the chain is on the cytoplasmic side. A helical membrane pass occupies residues 683-703 (AIVLLCVLLALTIATIPLLGG). At 704 to 723 (SKYNASPLCLPLPFGEPSTT) the chain is on the extracellular side. The chain crosses the membrane as a helical span at residues 724–744 (GYMVALVLLNSLCFLIMTIAY). The Cytoplasmic portion of the chain corresponds to 745-767 (TKLYCSLEKGELENLWDCSMVKH). Residues 768 to 788 (IALLLFANCILYCPVAFLSFS) form a helical membrane-spanning segment. At 789-802 (SLLNLTFISPDVIK) the chain is on the extracellular side. The N-linked (GlcNAc...) asparagine glycan is linked to Asn792. The helical transmembrane segment at 803–823 (FILLVIVPLPSCLNPLLYIVF) threads the bilayer. Residues 824–907 (NPHFKEDMGS…LSSVAFVPCL (84 aa)) are Cytoplasmic-facing.

Belongs to the G-protein coupled receptor 1 family. Identified in a complex composed of RNF43, LGR5 and RSPO1. Also interacts with other R-spondin ligands, including RSPO2, RSPO3 and RSPO4. Expressed in the intestinal epithelium (at protein level). Expressed in the gonads, the adrenal gland, and in the brain. In the central nervous system expression is restricted to the olfactory bulb. In the adrenal gland detected only in the neural-crest derived chromaffin cells of the medulla, but not in the cells of the adrenal cortex. In the gonads, the expression is high in Graafian follicle, but absent from primary and secondary follicles. In the intestine, exclusively expressed in cycling crypt base columnar cells. Expressed in the lower bulge and secondary germ area of telogen hair follicles and in the lower outer root sheath of anagen hair follicle.

The protein localises to the cell membrane. It localises to the golgi apparatus. Its subcellular location is the trans-Golgi network membrane. In terms of biological role, receptor for R-spondins that potentiates the canonical Wnt signaling pathway and acts as a stem cell marker of the intestinal epithelium and the hair follicle. Upon binding to R-spondins (RSPO1, RSPO2, RSPO3 or RSPO4), associates with phosphorylated LRP6 and frizzled receptors that are activated by extracellular Wnt receptors, triggering the canonical Wnt signaling pathway to increase expression of target genes. In contrast to classical G-protein coupled receptors, does not activate heterotrimeric G-proteins to transduce the signal. Involved in the development and/or maintenance of the adult intestinal stem cells during postembryonic development. This is Leucine-rich repeat-containing G-protein coupled receptor 5 (Lgr5) from Mus musculus (Mouse).